Reading from the N-terminus, the 557-residue chain is Dihydroxy-acid dehydratase (557 aa).

Asp-78 lines the Mg(2+) pocket. A [2Fe-2S] cluster-binding site is contributed by Cys-119. Positions 120 and 121 each coordinate Mg(2+). Lys-121 is modified (N6-carboxylysine). Cys-194 contributes to the [2Fe-2S] cluster binding site. Residue Glu-446 participates in Mg(2+) binding. The active-site Proton acceptor is Ser-472.

Belongs to the IlvD/Edd family. In terms of assembly, homodimer. The cofactor is [2Fe-2S] cluster. Mg(2+) serves as cofactor.

The catalysed reaction is (2R)-2,3-dihydroxy-3-methylbutanoate = 3-methyl-2-oxobutanoate + H2O. The enzyme catalyses (2R,3R)-2,3-dihydroxy-3-methylpentanoate = (S)-3-methyl-2-oxopentanoate + H2O. Its pathway is amino-acid biosynthesis; L-isoleucine biosynthesis; L-isoleucine from 2-oxobutanoate: step 3/4. It functions in the pathway amino-acid biosynthesis; L-valine biosynthesis; L-valine from pyruvate: step 3/4. In terms of biological role, functions in the biosynthesis of branched-chain amino acids. Catalyzes the dehydration of (2R,3R)-2,3-dihydroxy-3-methylpentanoate (2,3-dihydroxy-3-methylvalerate) into 2-oxo-3-methylpentanoate (2-oxo-3-methylvalerate) and of (2R)-2,3-dihydroxy-3-methylbutanoate (2,3-dihydroxyisovalerate) into 2-oxo-3-methylbutanoate (2-oxoisovalerate), the penultimate precursor to L-isoleucine and L-valine, respectively. This chain is Dihydroxy-acid dehydratase, found in Desulfosudis oleivorans (strain DSM 6200 / JCM 39069 / Hxd3) (Desulfococcus oleovorans).